We begin with the raw amino-acid sequence, 94 residues long: Large ribosomal subunit protein bL25 (94 aa).

It belongs to the bacterial ribosomal protein bL25 family. Part of the 50S ribosomal subunit; part of the 5S rRNA/L5/L18/L25 subcomplex. Contacts the 5S rRNA. Binds to the 5S rRNA independently of L5 and L18.

This is one of the proteins that binds to the 5S RNA in the ribosome where it forms part of the central protuberance. This is Large ribosomal subunit protein bL25 from Yersinia pestis bv. Antiqua (strain Antiqua).